Consider the following 407-residue polypeptide: Ran GTPase-activating protein 1 (407 aa).

LRR repeat units follow at residues 11-39 (EEEQ…EELA), 40-67 (ALKT…KCIA), 68-101 (ENTQ…KFLL), 102-133 (PVLL…DYIA), 134-166 (HAVN…LAQN), 167-197 (KKAA…ALGL), 198-226 (KSHS…IHYG), 227-256 (LQYL…KALP), 257-285 (TWKD…KVFT), 286-315 (EVKF…LPAM), and 316-346 (EKGN…LQSK). Residues 353-378 (DDFEEVDSEDEEGEDEEDEDEDEKLE) form a disordered region. Serine 360 carries the post-translational modification Phosphoserine.

This sequence belongs to the RNA1 family.

The protein localises to the cytoplasm. Functionally, GTPase activator for the nuclear Ras-related regulatory protein GSP1 (Ran), converting it to the putatively inactive GDP-bound state. The chain is Ran GTPase-activating protein 1 (RNA1) from Saccharomyces cerevisiae (strain ATCC 204508 / S288c) (Baker's yeast).